A 506-amino-acid chain; its full sequence is Maturase K (506 aa).

The protein belongs to the intron maturase 2 family. MatK subfamily.

The protein resides in the plastid. It is found in the chloroplast. Usually encoded in the trnK tRNA gene intron. Probably assists in splicing its own and other chloroplast group II introns. This chain is Maturase K, found in Rhododendron ferrugineum (Alpenrose).